The following is an 88-amino-acid chain: Small ribosomal subunit protein bS20 (88 aa).

Positions methionine 1 to asparagine 21 are disordered. The span at alanine 7–asparagine 21 shows a compositional bias: basic residues.

This sequence belongs to the bacterial ribosomal protein bS20 family.

Binds directly to 16S ribosomal RNA. This is Small ribosomal subunit protein bS20 from Acinetobacter baumannii (strain AB307-0294).